The following is a 757-amino-acid chain: RNA-directed RNA polymerase catalytic subunit (757 aa).

2 short sequence motifs (nuclear localization signal) span residues 187-195 and 203-216; these read RKRRVRDNM and RTIG…NKRS. Residues 249–256 are promoter-binding site; that stretch reads RGFVYFVE. The region spanning 286–483 is the RdRp catalytic domain; that stretch reads VRKMMTNSQD…GINMSKKKSY (198 aa).

Belongs to the influenza viruses polymerase PB1 family. As to quaternary structure, influenza RNA polymerase is composed of three subunits: PB1, PB2 and PA. Interacts (via N-terminus) with PA (via C-terminus). Interacts (via C-terminus) with PB2 (via N-terminus); this interaction is essential for transcription initiation. Post-translationally, phosphorylated by host PRKCA.

It localises to the host nucleus. The protein localises to the host cytoplasm. It carries out the reaction RNA(n) + a ribonucleoside 5'-triphosphate = RNA(n+1) + diphosphate. RNA-dependent RNA polymerase which is responsible for replication and transcription of virus RNA segments. The transcription of viral mRNAs occurs by a unique mechanism called cap-snatching. 5' methylated caps of cellular mRNAs are cleaved after 10-13 nucleotides by PA. In turn, these short capped RNAs are used as primers by PB1 for transcription of viral mRNAs. During virus replication, PB1 initiates RNA synthesis and copy vRNA into complementary RNA (cRNA) which in turn serves as a template for the production of more vRNAs. The chain is RNA-directed RNA polymerase catalytic subunit from Aves.